Here is a 144-residue protein sequence, read N- to C-terminus: MAEETSLVADKVPEPAVIDAVADAMPDSLEDALRIVLMKARETNGLICGLSEVTRALDRRTAHLCVLADDCEDEEYKKLVTALAKQNNIDLVSMDEREKLAQWAGLTRMAADGSVRKTLKCSCLAVRDFGERTKALDYLLSQLQ.

It belongs to the eukaryotic ribosomal protein eS12 family.

The sequence is that of Small ribosomal subunit protein eS12 (RPS12) from Trypanosoma brucei brucei.